The chain runs to 572 residues: Capsid vertex component 2 (572 aa).

Positions 1 to 58 (MFRPRFEPMNLPKDSNKPSTLMVLADRLNFISCAEGSSKYASKLFEGTLIDAEIMTNR) are interaction with major capsid protein/MCP.

It belongs to the herpesviridae CVC2 protein family. As to quaternary structure, heterodimerizes with CVC1. Interacts with major capsid protein/MCP and triplex capsid protein 1/TRX1 at the pentamer vertices. Interacts with the large tegument protein/LTP.

It is found in the virion. Its subcellular location is the host nucleus. In terms of biological role, capsid vertex-specific component that plays a role during viral DNA encapsidation, assuring correct genome cleavage and presumably stabilizing capsids that contain full-length viral genomes. Participates in the interaction between the capsid and the tegument through interaction with the large tegument protein/LTP. The sequence is that of Capsid vertex component 2 from Infectious laryngotracheitis virus (strain Thorne V882) (ILTV).